The chain runs to 790 residues: Choline transporter-like 2 (790 aa).

Residues 47–67 (PCLFLFVTFLCAWGYVAYYAV) form a helical membrane-spanning segment. N-linked (GlcNAc...) asparagine glycosylation is found at Asn102 and Asn259. Helical transmembrane passes span 288–308 (IITP…FQMI), 319–339 (ILVF…MLRW), and 344–364 (LVWI…YYSF). A glycan (N-linked (GlcNAc...) asparagine) is linked at Asn384. 2 helical membrane passes run 400 to 420 (LWIL…VLVL) and 449 to 469 (LVPW…LLFL). N-linked (GlcNAc...) asparagine glycosylation occurs at Asn483. 4 consecutive transmembrane segments (helical) span residues 545–565 (VIGF…VLAF), 592–612 (VYYH…CKII), 691–711 (VTGF…AAVT), and 728–748 (FVPA…FFSV).

This sequence belongs to the CTL (choline transporter-like) family.

It is found in the membrane. The protein is Choline transporter-like 2 of Anopheles gambiae (African malaria mosquito).